A 430-amino-acid chain; its full sequence is Histidine--tRNA ligase (430 aa).

It belongs to the class-II aminoacyl-tRNA synthetase family. As to quaternary structure, homodimer.

The protein resides in the cytoplasm. The enzyme catalyses tRNA(His) + L-histidine + ATP = L-histidyl-tRNA(His) + AMP + diphosphate + H(+). The protein is Histidine--tRNA ligase of Chlamydia caviae (strain ATCC VR-813 / DSM 19441 / 03DC25 / GPIC) (Chlamydophila caviae).